Here is a 205-residue protein sequence, read N- to C-terminus: Protein PYRAB00100 (205 aa).

One can recognise an AMMECR1 domain in the interval 7 to 201 (EWGEFLVRLA…EEYPRGPVRR (195 aa)).

This Pyrococcus abyssi (strain GE5 / Orsay) protein is Protein PYRAB00100.